The following is a 1729-amino-acid chain: 1,3-beta-glucan synthase component bgs1 (1729 aa).

Ser-23 is subject to Phosphoserine. 6 helical membrane-spanning segments follow: residues 378–398 (WTAC…AVVF), 416–436 (SMLL…FIFA), 448–468 (LVVG…YSIT), 503–523 (FVSW…SYFF), 546–566 (YILG…LLYL), and 577–597 (YLWY…CLGI). Phosphoserine occurs at positions 784 and 788. 8 helical membrane passes run 1180-1200 (MVIM…GAMY), 1237-1257 (ILSI…CELG), 1337-1357 (MLLF…WITL), 1440-1460 (YGEI…FLFI), 1484-1504 (VAPL…GIML), 1515-1535 (YGVY…VVVF), 1550-1572 (LLGF…ICFL), and 1678-1698 (ATLY…PFVF).

It belongs to the glycosyltransferase 48 family. Component of the 1,3-beta-glucan synthase (GS) complex, composed of at least the alternate catalytic subunits bgs1, bgs2, bgs3, and bgs4, and a regulatory subunit chr4.

The protein resides in the cell membrane. The protein localises to the cell septum. It carries out the reaction [(1-&gt;3)-beta-D-glucosyl](n) + UDP-alpha-D-glucose = [(1-&gt;3)-beta-D-glucosyl](n+1) + UDP + H(+). Functionally, alternate catalytic subunit of the 1,3-beta-glucan synthase (GS) complex. Synthesizes 1,3-beta-glucan, a major structural component of the fungal cell wall. Required for the assembly of the division septum and maintenance of cell polarity. The protein is 1,3-beta-glucan synthase component bgs1 (bgs1) of Schizosaccharomyces pombe (strain 972 / ATCC 24843) (Fission yeast).